The primary structure comprises 303 residues: MVPHVPEGCSVQQQLVCSVIPPLNSERRKGQAGRVGIVGGSAEYTGAPYFAAMAALRTGADLVHVFCHPSAATAIKAYSPELIVHPTLDAAVTCLPRLHAVVVGPGLGRDVEASWMPTLFNRIREQGLPVVVDADGLFYVTQNPDLVRGYSRAILTPNAVELDRLYRAVLGSPPRENAVPELARALGHVTVLAKGSEDIISDGHRLLRCTEQGSPRRCGGQGDLVSGSLALFAFWSHSAHDTPGEASKRQNSEYGPAMIAALGAAMLVRRCGRLAFQKMARSTLSSDMLAEVRTAFSMLFPVD.

Residues 12–299 (QQQLVCSVIP…AEVRTAFSML (288 aa)) enclose the YjeF C-terminal domain. Residues Gly-106 and 158–164 (NAVELDR) each bind (6S)-NADPHX. ATP-binding positions include 194–198 (KGSED) and 213–222 (GSPRRCGGQG). Asp-223 lines the (6S)-NADPHX pocket.

The protein belongs to the NnrD/CARKD family. Mg(2+) serves as cofactor.

The enzyme catalyses (6S)-NADHX + ATP = ADP + phosphate + NADH + H(+). The catalysed reaction is (6S)-NADPHX + ATP = ADP + phosphate + NADPH + H(+). Functionally, catalyzes the dehydration of the S-form of NAD(P)HX at the expense of ATP, which is converted to ADP. Together with NAD(P)HX epimerase, which catalyzes the epimerization of the S- and R-forms, the enzyme allows the repair of both epimers of NAD(P)HX, a damaged form of NAD(P)H that is a result of enzymatic or heat-dependent hydration. In Ixodes scapularis (Black-legged tick), this protein is ATP-dependent (S)-NAD(P)H-hydrate dehydratase.